Reading from the N-terminus, the 635-residue chain is MIQVTCDQKNYEVLEGTTAAELAKQLKNSHQFIGVLINERPRDLSTHLNEGDTLVFLTSEDPEGREIFLHTSAHLLAQAVLRLWPDAIPTIGPVIDHGFYYDFANLSISESDFPLIEDTVKQIVDEKLAISRFTYGDKQQALAQFPQNPFKTELIRELPENEEISAYSQGEFFDLCRGPHLPSTAHVKAFKVLRTSAAYWRGDPSRESLVRIYGTSFPTSKELRAHLEQIEEAKKRDHRVLGAKLDLFSQQESSPGMPFFHPRGMIVWDALIRYWKQLHTAAGYKEILTPQLMNRQLWEVSGHWDNYKANMYTLQIDDEDYAIKPMNCPGCMLYYKTRLHSYKEFPLRVAEVGHVHRQEASGALSGLMRVRAFHQDDAHVFLTPEQVEEETLNILQLVSTLYGTFGLEYHLELSTRPEKDTIGDDSLWELATDALNRALVQSGTPFIVRPGEGAFYGPKIDIHVKDAIQRTWQCGTIQLDMFLPERFELEYTTAQGTKSVPVMLHRALFGSIERFLGILIENFKGRFPLWLSPEQVRIITVADRHIPRAKELEEAWKRLGLVVTLDDSSESVSKKIRNAQNMQVNYMITLGDHEINENVLAVRTRDNRVINDVSVERFLNTILEEKNSLSLTALL.

The TGS domain occupies 1–58 (MIQVTCDQKNYEVLEGTTAAELAKQLKNSHQFIGVLINERPRDLSTHLNEGDTLVFLT). Residues 237–528 (DHRVLGAKLD…LIENFKGRFP (292 aa)) form a catalytic region. Zn(2+)-binding residues include Cys328, His379, and His505.

The protein belongs to the class-II aminoacyl-tRNA synthetase family. As to quaternary structure, homodimer. Zn(2+) serves as cofactor.

Its subcellular location is the cytoplasm. It carries out the reaction tRNA(Thr) + L-threonine + ATP = L-threonyl-tRNA(Thr) + AMP + diphosphate + H(+). Catalyzes the attachment of threonine to tRNA(Thr) in a two-step reaction: L-threonine is first activated by ATP to form Thr-AMP and then transferred to the acceptor end of tRNA(Thr). Also edits incorrectly charged L-seryl-tRNA(Thr). The protein is Threonine--tRNA ligase of Chlamydia pneumoniae (Chlamydophila pneumoniae).